The sequence spans 307 residues: Oxygen-dependent coproporphyrinogen-III oxidase (307 aa).

Serine 99 is a binding site for substrate. Positions 103 and 113 each coordinate a divalent metal cation. Catalysis depends on histidine 113, which acts as the Proton donor. 115 to 117 (NVR) is a substrate binding site. Residues histidine 152 and histidine 182 each coordinate a divalent metal cation. Positions 247 to 282 (YVEFNLVFDRGTLFGLQSGGRTESILMSMPPVVNWR) are important for dimerization. 265 to 267 (GGR) contributes to the substrate binding site.

It belongs to the aerobic coproporphyrinogen-III oxidase family. In terms of assembly, homodimer. It depends on a divalent metal cation as a cofactor.

It localises to the cytoplasm. The enzyme catalyses coproporphyrinogen III + O2 + 2 H(+) = protoporphyrinogen IX + 2 CO2 + 2 H2O. Its pathway is porphyrin-containing compound metabolism; protoporphyrin-IX biosynthesis; protoporphyrinogen-IX from coproporphyrinogen-III (O2 route): step 1/1. In terms of biological role, involved in the heme biosynthesis. Catalyzes the aerobic oxidative decarboxylation of propionate groups of rings A and B of coproporphyrinogen-III to yield the vinyl groups in protoporphyrinogen-IX. This is Oxygen-dependent coproporphyrinogen-III oxidase from Paraburkholderia phytofirmans (strain DSM 17436 / LMG 22146 / PsJN) (Burkholderia phytofirmans).